The primary structure comprises 268 residues: HLA class II histocompatibility antigen, DQ beta 2 chain (268 aa).

Positions 1–32 are cleaved as a signal peptide; that stretch reads MSWKMALQIPGGFWAAAVTVMLVMLSTPVAEA. A beta-1 region spans residues 33 to 126; the sequence is RDFPKDFLVQ…ELRTTLQRQV (94 aa). Residues 33–229 are Extracellular-facing; it reads RDFPKDFLVQ…RAQSESAQSK (197 aa). 2 cysteine pairs are disulfide-bonded: Cys47-Cys110 and Cys148-Cys204. An N-linked (GlcNAc...) asparagine glycan is attached at Asn51. The beta-2 stretch occupies residues 127–229; sequence EPTVTISPSR…RAQSESAQSK (103 aa). In terms of domain architecture, Ig-like C1-type spans 128–216; sequence PTVTISPSRT…EHPSLQSPIT (89 aa). Residues 230–250 traverse the membrane as a helical segment; sequence MLSGIGGFVLGLIFLGLGLII. Over 251 to 268 the chain is Cytoplasmic; the sequence is RHRGQKGPRGPPPAGLLH.

It belongs to the MHC class II family. In terms of assembly, heterodimer of an alpha and a beta subunit; also referred as MHC class II molecule. Dimer formation with HLA-DQA2, but not with HLA-DQA1, is required for efficient exit from the endoplasmic reticulum (ER). In the ER, forms a heterononamer; 3 MHC class II molecules bind to a CD74 homotrimer (also known as invariant chain or HLA class II histocompatibility antigen gamma chain). In the endosomal/lysosomal system; CD74 undergoes sequential degradation by various proteases; leaving a small fragment termed CLIP on each MHC class II molecule. MHC class II molecule interacts with HLA_DM, and HLA_DO in B-cells, in order to release CLIP and facilitate the binding of antigenic peptides. Association with HLA-DMA also occurs in skin Langerhans cells, in post-Golgi compartments. Restricted to skin Langerhans cells (at protein level).

It localises to the cell membrane. It is found in the endoplasmic reticulum membrane. Its subcellular location is the golgi apparatus. The protein localises to the trans-Golgi network membrane. The protein resides in the endosome membrane. It localises to the lysosome membrane. Functionally, binds peptides derived from antigens that access the endocytic route of antigen presenting cells (APC) and presents them on the cell surface for recognition by the CD4 T-cells. The peptide binding cleft accommodates peptides of 10-30 residues. The peptides presented by MHC class II molecules are generated mostly by degradation of proteins that access the endocytic route, where they are processed by lysosomal proteases and other hydrolases. Exogenous antigens that have been endocytosed by the APC are thus readily available for presentation via MHC II molecules, and for this reason this antigen presentation pathway is usually referred to as exogenous. As membrane proteins on their way to degradation in lysosomes as part of their normal turn-over are also contained in the endosomal/lysosomal compartments, exogenous antigens must compete with those derived from endogenous components. Autophagy is also a source of endogenous peptides, autophagosomes constitutively fuse with MHC class II loading compartments. In addition to APCs, other cells of the gastrointestinal tract, such as epithelial cells, express MHC class II molecules and CD74 and act as APCs, which is an unusual trait of the GI tract. To produce a MHC class II molecule that presents an antigen, three MHC class II molecules (heterodimers of an alpha and a beta chain) associate with a CD74 trimer in the ER to form a heterononamer. Soon after the entry of this complex into the endosomal/lysosomal system where antigen processing occurs, CD74 undergoes a sequential degradation by various proteases, including CTSS and CTSL, leaving a small fragment termed CLIP (class-II-associated invariant chain peptide). The removal of CLIP is facilitated by HLA-DM via direct binding to the alpha-beta-CLIP complex so that CLIP is released. HLA-DM stabilizes MHC class II molecules until primary high affinity antigenic peptides are bound. The MHC II molecule bound to a peptide is then transported to the cell membrane surface. In B-cells, the interaction between HLA-DM and MHC class II molecules is regulated by HLA-DO. Primary dendritic cells (DCs) also to express HLA-DO. Lysosomal microenvironment has been implicated in the regulation of antigen loading into MHC II molecules, increased acidification produces increased proteolysis and efficient peptide loading. The protein is HLA class II histocompatibility antigen, DQ beta 2 chain (HLA-DQB2) of Homo sapiens (Human).